We begin with the raw amino-acid sequence, 199 residues long: CASP-like protein 2B1 (199 aa).

The Cytoplasmic segment spans residues 1–26 (MSYLGVGLSPVNVAGTKMKLMDRKVR). Residues 27-47 (LTELILRCSVCALALVAAILI) traverse the membrane as a helical segment. Residues 48–69 (ATDTQVKEIFTIQKKAKYTDMK) lie on the Extracellular side of the membrane. The helical transmembrane segment at 70–90 (ALVFLVVVNGIAAAYSLLHMV) threads the bilayer. Over 91-106 (RCVVGMMKGSVLFSKP) the chain is Cytoplasmic. Residues 107-127 (LAWAIFSGDQAIAYLTVAGVA) form a helical membrane-spanning segment. Over 128–164 (AAAQSAAFAKLGEPELQWMKICTIYGKFCNQVGEGIA) the chain is Extracellular. A helical membrane pass occupies residues 165–185 (TALLASIGMVLISSISAFALF). Topologically, residues 186–199 (RLYGGNKAQQGSRW) are cytoplasmic.

This sequence belongs to the Casparian strip membrane proteins (CASP) family. As to quaternary structure, homodimer and heterodimers.

The protein localises to the cell membrane. In Eutrema halophilum (Salt cress), this protein is CASP-like protein 2B1.